A 160-amino-acid polypeptide reads, in one-letter code: Ubiquitin-conjugating enzyme E2 16 (160 aa).

A UBC core domain is found at 3 to 153; sequence SSIKRLHKEY…VRCTTYLYAK (151 aa). The Glycyl thioester intermediate role is filled by Cys90.

This sequence belongs to the ubiquitin-conjugating enzyme family.

It carries out the reaction S-ubiquitinyl-[E1 ubiquitin-activating enzyme]-L-cysteine + [E2 ubiquitin-conjugating enzyme]-L-cysteine = [E1 ubiquitin-activating enzyme]-L-cysteine + S-ubiquitinyl-[E2 ubiquitin-conjugating enzyme]-L-cysteine.. The protein operates within protein modification; protein ubiquitination. Its function is as follows. Catalyzes the covalent attachment of ubiquitin to other proteins. This chain is Ubiquitin-conjugating enzyme E2 16 (ubc16), found in Schizosaccharomyces pombe (strain 972 / ATCC 24843) (Fission yeast).